The primary structure comprises 866 residues: Putative linoleate 9S-lipoxygenase 3 (866 aa).

The PLAT domain occupies N33–A161. The 703-residue stretch at A164–I866 folds into the Lipoxygenase domain. The segment at Y206–L250 is disordered. Fe cation is bound by residues H521, H526, H712, N716, and I866.

Belongs to the lipoxygenase family. It depends on Fe cation as a cofactor.

It carries out the reaction (9Z,12Z)-octadecadienoate + O2 = (9S)-hydroperoxy-(10E,12Z)-octadecadienoate. It functions in the pathway lipid metabolism; oxylipin biosynthesis. In terms of biological role, plant lipoxygenase may be involved in a number of diverse aspects of plant physiology including growth and development, pest resistance, and senescence or responses to wounding. Catalyzes the hydroperoxidation of lipids containing a cis,cis-1,4-pentadiene structure. This chain is Putative linoleate 9S-lipoxygenase 3, found in Oryza sativa subsp. japonica (Rice).